A 503-amino-acid chain; its full sequence is Depupylase (503 aa).

Glu8 and Tyr92 together coordinate Mg(2+). Asp94 serves as the catalytic Proton acceptor. Residue Glu99 coordinates Mg(2+). Residue 101 to 102 (ST) participates in ATP binding. His155 lines the Mg(2+) pocket. ATP contacts are provided by Asn157 and Arg239. Residue His241 coordinates Mg(2+).

The protein belongs to the Pup ligase/Pup deamidase family. Pup deamidase subfamily. As to quaternary structure, likely interacts with the C-terminal half of the prokaryotic ubiquitin-like protein Pup. Requires ATP as cofactor.

It functions in the pathway protein degradation; proteasomal Pup-dependent pathway. Its function is as follows. Displays depupylase (DPUP) activity, removing conjugated Pup from target proteins; is thus involved in the recycling of Pup and may function similarly to deubiquitinases (DUBs) in eukaryotes to prevent or promote proteasomal degradation of certain proteins. Is also able to catalyze the deamidation of the C-terminal glutamine to glutamate in a variant of the prokaryotic ubiquitin-like protein Pup; however, since Pup from A.cellulolyticus possesses a C-terminal glutamate, this deamidase activity may be of no significance in vivo. The sequence is that of Depupylase (dop) from Acidothermus cellulolyticus (strain ATCC 43068 / DSM 8971 / 11B).